The following is a 333-amino-acid chain: Holliday junction branch migration complex subunit RuvB (333 aa).

The interval 1–181 is large ATPase domain (RuvB-L); sequence MTRILDNDLI…FGITGHMEYY (181 aa). ATP-binding positions include L20, R21, G62, K65, T66, T67, 128-130, R171, Y181, and R218; that span reads EDF. T66 is a Mg(2+) binding site. Positions 182–252 are small ATPAse domain (RuvB-S); the sequence is QTADLTEIVE…ITDKALTMLD (71 aa). A head domain (RuvB-H) region spans residues 255 to 333; it reads QEGLDYVDQK…HLGYPYEKKH (79 aa). R291, R310, R312, and R315 together coordinate DNA.

Belongs to the RuvB family. As to quaternary structure, homohexamer. Forms an RuvA(8)-RuvB(12)-Holliday junction (HJ) complex. HJ DNA is sandwiched between 2 RuvA tetramers; dsDNA enters through RuvA and exits via RuvB. An RuvB hexamer assembles on each DNA strand where it exits the tetramer. Each RuvB hexamer is contacted by two RuvA subunits (via domain III) on 2 adjacent RuvB subunits; this complex drives branch migration. In the full resolvosome a probable DNA-RuvA(4)-RuvB(12)-RuvC(2) complex forms which resolves the HJ.

The protein localises to the cytoplasm. It catalyses the reaction ATP + H2O = ADP + phosphate + H(+). The RuvA-RuvB-RuvC complex processes Holliday junction (HJ) DNA during genetic recombination and DNA repair, while the RuvA-RuvB complex plays an important role in the rescue of blocked DNA replication forks via replication fork reversal (RFR). RuvA specifically binds to HJ cruciform DNA, conferring on it an open structure. The RuvB hexamer acts as an ATP-dependent pump, pulling dsDNA into and through the RuvAB complex. RuvB forms 2 homohexamers on either side of HJ DNA bound by 1 or 2 RuvA tetramers; 4 subunits per hexamer contact DNA at a time. Coordinated motions by a converter formed by DNA-disengaged RuvB subunits stimulates ATP hydrolysis and nucleotide exchange. Immobilization of the converter enables RuvB to convert the ATP-contained energy into a lever motion, pulling 2 nucleotides of DNA out of the RuvA tetramer per ATP hydrolyzed, thus driving DNA branch migration. The RuvB motors rotate together with the DNA substrate, which together with the progressing nucleotide cycle form the mechanistic basis for DNA recombination by continuous HJ branch migration. Branch migration allows RuvC to scan DNA until it finds its consensus sequence, where it cleaves and resolves cruciform DNA. The sequence is that of Holliday junction branch migration complex subunit RuvB from Streptococcus equi subsp. zooepidemicus (strain MGCS10565).